The following is a 338-amino-acid chain: MEKQTVAVLGPGSWGTALSQVLNDNGHEVRIWGNLPEQINEINTHHTNKHYFKDVVLDENIIAYTDLAETLKDVDAILFVVPTKVTRLVAQQVAQTLDHKVIIMHASKGLEPDSHKQLSTILEEEIPEHLRSDIVVVSGPSHAEETIVRDLTLITAASKDLQTAQYVQKLFSNHYFRLYTNTDVIGVETAGALKNIIAVGAGALHGLGFGDNAKAAIIARGLAEITRLGVALGASPLTYSGLSGVGDLIVTGTSIHSRNWRAGDALGRGESLADIEANMGMVIEGISTTRAAYELAQELGVYMPITQAIYQVIYHGTNIKDAIYDIMNNEFKAENEWS.

Ser13, Trp14, and Lys108 together coordinate NADPH. Sn-glycerol 3-phosphate-binding residues include Lys108, Gly139, and Ser141. Ala143 is a binding site for NADPH. The sn-glycerol 3-phosphate site is built by Lys194, Asp247, Ser257, Arg258, and Asn259. The Proton acceptor role is filled by Lys194. NADPH is bound at residue Arg258. NADPH-binding residues include Val282 and Glu284.

The protein belongs to the NAD-dependent glycerol-3-phosphate dehydrogenase family.

It localises to the cytoplasm. The enzyme catalyses sn-glycerol 3-phosphate + NAD(+) = dihydroxyacetone phosphate + NADH + H(+). The catalysed reaction is sn-glycerol 3-phosphate + NADP(+) = dihydroxyacetone phosphate + NADPH + H(+). It participates in membrane lipid metabolism; glycerophospholipid metabolism. Its function is as follows. Catalyzes the reduction of the glycolytic intermediate dihydroxyacetone phosphate (DHAP) to sn-glycerol 3-phosphate (G3P), the key precursor for phospholipid synthesis. This is Glycerol-3-phosphate dehydrogenase [NAD(P)+] from Streptococcus pneumoniae (strain CGSP14).